A 133-amino-acid chain; its full sequence is Profilin (133 aa).

It belongs to the profilin family.

More likely to influence phosphoinositide metabolism than actin assembly. In Camelus, this protein is Profilin.